We begin with the raw amino-acid sequence, 772 residues long: MAFTFLSPHPVFLSLTGTTSSFSYKPVLLPFSRNSRTLTVAAGPARRNSYPNPADDDPPEAPEDSMHGVSKFQQIQRQAARARKLEEEDFEKNRNTYLSAIADVEDAAETGRDDEESGGDLFSDIDRAISMKRSEFVKQGLLKPNPPKTASLKKIGEEGNEEEGDVTDDVDELDEEEVVDLDEIDKLTGLTEISDEEDWVDEEGNTRINKKKEFGSDHQFEFDLDDFGESKARIVEPKFKMCLAELLDESKVVPISVYGDLDVEITGIQHDSRGVSAGDLFVCCLGSENFLSEADKRGAVAVVASKEIDIEDTLGCRALVIVEDTNAVLAALASSFYRHPSKNMSVIGVTGTDGKTTTTYLIKSLYEAMGVRTGMFSTVSCYIHGDNKLDTPNATMNPDAVLVQSLMAKMLHNGTESLVMEASPQELALGKCDEVDFDIAVFTNLTRENTDFRGTDEEYRDAEAKLFSRMVDPERHRKVVNIDDPNAAFFVQQGNPNVPVVTFAMENTKADVHPLKFELSLFETQVLVNTPQGILEISSGLLGRHNIYNILAAVAVGIAVGAPLEDIVRGVEEVDAVPGRCELIDEEQAFGVIVDHANTPDGLSRLLDSIRELKPRRIITVIGCEGENERGKRPLMTKIATEKSDVTMLTSDNPRNEDPLDILDDMLSGIGWTMQEYLKHGEHDYYPPLANGHRLFLHDIRRVAVRCAVAMGEEGDMVVVAGKGHEAYQLEGEKKEFYDDREECREALQYVDELHQAGIDTSEFPWRLPESH.

The transit peptide at 1–40 (MAFTFLSPHPVFLSLTGTTSSFSYKPVLLPFSRNSRTLTV) directs the protein to the chloroplast. Disordered stretches follow at residues 42–87 (AGPA…KLEE) and 141–168 (LLKP…DVTD). Acidic residues-rich tracts occupy residues 54–63 (ADDDPPEAPE) and 158–168 (EGNEEEGDVTD). A Phosphoserine modification is found at Ser-194.

It belongs to the MurCDEF family. MurE subfamily. Component of the plastid-encoded plastid RNA polymerase (PEP) complex. As to expression, expressed in leaves and flowers.

The protein localises to the plastid. It is found in the chloroplast. Involved in chloroplast biogenesis. Required for thylakoid membrane development. Seems to be required for plastid-encoded plastid RNA polymerase (PEP)-dependent gene expression. This is UDP-N-acetylmuramoyl-L-alanyl-D-glutamate--2,6-diaminopimelate ligase MurE homolog, chloroplastic from Arabidopsis thaliana (Mouse-ear cress).